The chain runs to 58 residues: U-scoloptoxin(14)-Sa1a (58 aa).

Residues 1-18 (MNRILGMIFLFCLISCYA) form the signal peptide.

The protein belongs to the scoloptoxin-14 family. In terms of processing, contains 4 disulfide bonds. Expressed by the venom gland.

It is found in the secreted. This chain is U-scoloptoxin(14)-Sa1a, found in Scolopendra alternans (Florida Keys giant centipede).